Here is a 463-residue protein sequence, read N- to C-terminus: Secretogranin-3 (463 aa).

A signal peptide spans methionine 1 to glycine 20. Disordered regions lie at residues valine 87–lysine 111, aspartate 225–aspartate 267, and glutamate 353–alanine 398. 2 stretches are compositionally biased toward basic and acidic residues: residues glycine 102 to lysine 111 and glutamine 229 to leucine 262.

In terms of assembly, interacts with CHGA. Interacts with secretogranin II/SCG2. Interacts (via C-terminus) with CPE.

Its subcellular location is the cytoplasmic vesicle. It localises to the secretory vesicle. The protein resides in the secretory vesicle membrane. The protein localises to the secreted. Its function is as follows. Member of the granin protein family that regulates the biogenesis of secretory granules. Acts as a sorting receptor for intragranular proteins including chromogranin A/CHGA. May also play a role in angiogenesis. Promotes endothelial proliferation, migration and tube formation through MEK/ERK signaling pathway. The polypeptide is Secretogranin-3 (scg3) (Xenopus tropicalis (Western clawed frog)).